The chain runs to 144 residues: 3-dehydroquinate dehydratase (144 aa).

Catalysis depends on Tyr-22, which acts as the Proton acceptor. The substrate site is built by Asn-73, His-79, and Asp-86. The active-site Proton donor is the His-99. Substrate is bound by residues 100 to 101 (IS) and Arg-110.

This sequence belongs to the type-II 3-dehydroquinase family. Homododecamer.

It carries out the reaction 3-dehydroquinate = 3-dehydroshikimate + H2O. It functions in the pathway metabolic intermediate biosynthesis; chorismate biosynthesis; chorismate from D-erythrose 4-phosphate and phosphoenolpyruvate: step 3/7. Its function is as follows. Catalyzes a trans-dehydration via an enolate intermediate. This Clostridium acetobutylicum (strain ATCC 824 / DSM 792 / JCM 1419 / IAM 19013 / LMG 5710 / NBRC 13948 / NRRL B-527 / VKM B-1787 / 2291 / W) protein is 3-dehydroquinate dehydratase.